The sequence spans 248 residues: mRNA-decapping protein OPG122 (248 aa).

One can recognise a Nudix hydrolase domain in the interval 45–227 (HKRVSVSAIL…IAKYALDTAK (183 aa)). A Nudix box motif is present at residues 126 to 147 (GIPKRGENVPECLSREIKEEVN). E132 contributes to the Mg(2+) binding site. The Nucleophile role is filled by E141. Position 145 (E145) interacts with Mn(2+). D167 contributes to the Mg(2+) binding site.

It belongs to the Nudix hydrolase family. It depends on Mg(2+) as a cofactor. Requires Mn(2+) as cofactor.

It localises to the host mitochondrion. In terms of biological role, decapping enzyme that remove the protective 5'-cap from both host and viral mRNAs to commit transcripts for decay by the cellular exonuclease XRN1. Preferentially targets spliced mRNAs and since all viral genes are intronless, it preferentially targets host over viral transcripts. Acceleration of the turnover of cellular transcripts promotes the shutoff of host protein synthesis and therefore diminish the magnitude of antiviral response. This is mRNA-decapping protein OPG122 (OPG122) from Vaccinia virus (strain Copenhagen) (VACV).